A 293-amino-acid polypeptide reads, in one-letter code: 1D-myo-inositol 2-acetamido-2-deoxy-alpha-D-glucopyranoside deacetylase (293 aa).

The Zn(2+) site is built by His-16, Asp-19, and His-156.

The protein belongs to the MshB deacetylase family. Requires Zn(2+) as cofactor.

It catalyses the reaction 1D-myo-inositol 2-acetamido-2-deoxy-alpha-D-glucopyranoside + H2O = 1D-myo-inositol 2-amino-2-deoxy-alpha-D-glucopyranoside + acetate. Its function is as follows. Catalyzes the deacetylation of 1D-myo-inositol 2-acetamido-2-deoxy-alpha-D-glucopyranoside (GlcNAc-Ins) in the mycothiol biosynthesis pathway. The polypeptide is 1D-myo-inositol 2-acetamido-2-deoxy-alpha-D-glucopyranoside deacetylase (Nakamurella multipartita (strain ATCC 700099 / DSM 44233 / CIP 104796 / JCM 9543 / NBRC 105858 / Y-104) (Microsphaera multipartita)).